Here is a 958-residue protein sequence, read N- to C-terminus: Transportin MOS14 (958 aa).

The region spanning 26–93 (ADRWLQNFQG…RQSLTTLLKK (68 aa)) is the Importin N-terminal domain.

This sequence belongs to the importin beta family. Interacts with RS2Z33, RSZ21, RS31A, SR34 and RAN1.

It localises to the nucleus. Functions as a nuclear import receptor for serine-arginine rich (SR) proteins. Regulates nuclear import of SR proteins that are required for proper splicing of the two resistance (R) genes SNC1 and RPS4, a crucial step for their functions in plant immunity. The protein is Transportin MOS14 of Arabidopsis thaliana (Mouse-ear cress).